The primary structure comprises 573 residues: Hemagglutinin-neuraminidase (573 aa).

The Intravirion portion of the chain corresponds to 1 to 27 (MQDSHGNTQILNQANSMVKRTWRLLFR). The helical transmembrane segment at 28–48 (IATLILLVSIFVLSLIIVLQS) threads the bilayer. Topologically, residues 49-573 (TPGNLQNDIN…DFQITLFLAA (525 aa)) are virion surface. 3 disulfides stabilise this stretch: Cys-173–Cys-197, Cys-187–Cys-248, and Cys-239–Cys-252. The involved in neuraminidase activity stretch occupies residues 235–240 (NRKSCS). 4 N-linked (GlcNAc...) asparagine; by host glycosylation sites follow: Asn-258, Asn-330, Asn-339, and Asn-347. Cystine bridges form between Cys-345/Cys-466, Cys-377/Cys-387, and Cys-460/Cys-470. Residue Asn-433 is glycosylated (N-linked (GlcNAc...) asparagine; by host). Residues Asn-502 and Asn-530 are each glycosylated (N-linked (GlcNAc...) asparagine; by host). Cys-540 and Cys-551 are joined by a disulfide.

The protein belongs to the paramyxoviruses hemagglutinin-neuraminidase family. In terms of assembly, homotetramer; composed of disulfide-linked homodimers. Interacts with F protein trimer.

The protein localises to the virion membrane. It is found in the host cell membrane. The enzyme catalyses Hydrolysis of alpha-(2-&gt;3)-, alpha-(2-&gt;6)-, alpha-(2-&gt;8)- glycosidic linkages of terminal sialic acid residues in oligosaccharides, glycoproteins, glycolipids, colominic acid and synthetic substrates.. Attaches the virus to sialic acid-containing cell receptors and thereby initiating infection. Binding of HN protein to the receptor induces a conformational change that allows the F protein to trigger virion/cell membranes fusion. Functionally, neuraminidase activity ensures the efficient spread of the virus by dissociating the mature virions from the neuraminic acid containing glycoproteins. In Homo sapiens (Human), this protein is Hemagglutinin-neuraminidase (HN).